Here is a 101-residue protein sequence, read N- to C-terminus: UPF0125 protein VC_0850 (101 aa).

Belongs to the UPF0125 (RnfH) family.

In Vibrio cholerae serotype O1 (strain ATCC 39315 / El Tor Inaba N16961), this protein is UPF0125 protein VC_0850.